A 191-amino-acid polypeptide reads, in one-letter code: Probable GTP-binding protein EngB (191 aa).

In terms of domain architecture, EngB-type G spans 22 to 190 (RLPEIAFLGR…WQAITTTLQA (169 aa)). Residues 30 to 37 (GRSNVGKS), 57 to 61 (GRTQT), 75 to 78 (DLPG), 142 to 145 (TKTD), and 169 to 171 (FSA) each bind GTP. 2 residues coordinate Mg(2+): serine 37 and threonine 59.

This sequence belongs to the TRAFAC class TrmE-Era-EngA-EngB-Septin-like GTPase superfamily. EngB GTPase family. Mg(2+) serves as cofactor.

Functionally, necessary for normal cell division and for the maintenance of normal septation. The chain is Probable GTP-binding protein EngB from Solibacter usitatus (strain Ellin6076).